We begin with the raw amino-acid sequence, 309 residues long: Malate dehydrogenase (309 aa).

Residues 9 to 14 (GAGFVG) and Asp-33 each bind NAD(+). Arg-82 and Arg-88 together coordinate substrate. NAD(+) contacts are provided by residues Asn-95 and 118 to 120 (VNN). Positions 120 and 151 each coordinate substrate. The Proton acceptor role is filled by His-175.

The protein belongs to the LDH/MDH superfamily. MDH type 3 family. Homotetramer (active enzyme); homodimer and homotrimer at temperatures lower than 55 degrees Celsius (inactive forms).

It catalyses the reaction (S)-malate + NAD(+) = oxaloacetate + NADH + H(+). Functionally, catalyzes the reversible oxidation of malate to oxaloacetate. This chain is Malate dehydrogenase, found in Chloroflexus aurantiacus (strain ATCC 29366 / DSM 635 / J-10-fl).